Consider the following 205-residue polypeptide: High frequency lysogenization protein HflD homolog (205 aa).

It belongs to the HflD family.

Its subcellular location is the cytoplasm. The protein localises to the cell inner membrane. This is High frequency lysogenization protein HflD homolog from Shewanella halifaxensis (strain HAW-EB4).